The chain runs to 248 residues: uncharacterized protein (248 aa).

Ser-141 is a substrate binding site. Tyr-154 acts as the Proton acceptor in catalysis.

Belongs to the short-chain dehydrogenases/reductases (SDR) family.

This is an uncharacterized protein from Methylorubrum extorquens (strain ATCC 14718 / DSM 1338 / JCM 2805 / NCIMB 9133 / AM1) (Methylobacterium extorquens).